The following is a 4830-amino-acid chain: Siderophore peptide synthetase fer3 (4830 aa).

Residues 197 to 623 (LDQAEKFPDR…LGRMNAEQVK (427 aa)) are adenylation 1. Positions 751-833 (ANEDPVTQAL…DLIPLLSDTT (83 aa)) constitute a Carrier 1 domain. Serine 788 carries the O-(pantetheine 4'-phosphoryl)serine modification. The tract at residues 879 to 1317 (QKIFPTTATQ…HSLMREPETT (439 aa)) is condensation 1. The tract at residues 1358–1781 (FENKAATEPE…IGRRDDLVKL (424 aa)) is adenylation 2. A Carrier 2 domain is found at 1929–2005 (GEDGDLQCQV…MLIRGLATKT (77 aa)). An O-(pantetheine 4'-phosphoryl)serine modification is found at serine 1966. Positions 2048 to 2503 (IPCSTLQEGM…LLDQVVSLLT (456 aa)) are condensation 2. An adenylation 3 region spans residues 2573–2977 (AGTPETACIN…LGRRDEQEKI (405 aa)). The Carrier 3 domain occupies 3122 to 3198 (RPLSSLEREI…DIAAELSDSK (77 aa)). An O-(pantetheine 4'-phosphoryl)serine modification is found at serine 3159. The segment at 3232-3621 (KVLPCLPSQE…RDRDELRISA (390 aa)) is condensation 3. One can recognise a Carrier 4 domain in the interval 3685–3760 (TAAEEQIRDL…GLSKLLDQRQ (76 aa)). Position 3720 is an O-(pantetheine 4'-phosphoryl)serine (serine 3720). A condensation 4 region spans residues 3779–4199 (RYKATPLQAG…GVQIKAGASD (421 aa)). The region spanning 4264–4340 (SLSTAEQDIV…RLTVATETRS (77 aa)) is the Carrier 5 domain. At serine 4301 the chain carries O-(pantetheine 4'-phosphoryl)serine. A condensation 5 region spans residues 4381-4708 (VLPLLTGQQQ…DLVSRAEHQQ (328 aa)).

Belongs to the NRP synthetase family.

The protein operates within siderophore biosynthesis. Nonribosomal peptide synthetase; part of the gene cluster that mediates the biosynthesis of siderophore ferrichrome A which is contributing to organismal virulence. The first step of ferrichrome A biosynthesis is performed by the HMG-CoA synthase hcs1 which catalyzes the generation of HMG-CoA and CoA using acetoacetyl-CoA and acetyl-CoA as substrates. The enoyl-CoA isomerase/hydratase fer4 then catalyzes the conversion of hcs1-produced HMG-CoA to methylglutaconyl-CoA. The acyltransferase fer5 then fuses the fer4-generated methylglutaconyl-CoA with sid1-generated hydroxyornithine to yield methylglutaconyl hydroxyornithine. Methylglutaconyl hydroxyornithine is then available for use by the NRPS fer3 to generate ferrichrome A. This is Siderophore peptide synthetase fer3 from Mycosarcoma maydis (Corn smut fungus).